Reading from the N-terminus, the 312-residue chain is MRHNQMCCETPPTVTVHVKSGSNRSHQTRKPVSLKRPILKDSWQASEKNAHNNKPKRPRGPCLIIQRQEMTAFFKLFDDDLIQDFLWMDCCCKIADKYLLAMTFVYFKRAKFTISEHTRINFFIALYLANTVEEDEEEAKYEIFPWALGKNWRKLFPNFLKLRDQLWDRIDYRAIVSRRCCEEVMAIAPSHYIWQRERSVHHSGAARNYNRDEVHLPRGPSATPVDCSLCGKKGRYVRLGLSSSSSSSSDIVELTGKRSQELHNSLSMDMIGDPSQANTYSQVANDHQSKKENETNFVKKTKSMGWFAESEE.

A speedy/Ringo box; Required for CDK-binding region spans residues 67-199; it reads RQEMTAFFKL…SHYIWQRERS (133 aa). Phosphoserine is present on S221. A Phosphothreonine modification is found at T223.

It belongs to the Speedy/Ringo family. Interacts with CDK1. Interacts with CDK2. May interact with CDKN1B/KIP1. Identified in a complex with CDK2 and CDKN1B/KIP1, where it interacts primarily with CDK2.

Its subcellular location is the nucleus. Its function is as follows. Regulates the G1/S phase transition of the cell cycle by binding and activating CDK1 and CDK2. Contributes to CDK2 activation without promoting CDK2 phosphorylation, by inducing a conformation change of the CDK2 T-loop that obstructs the substrate-binding cleft prior to kinase activation. Interferes with CDKN1B-mediated inhibition of CDK2. Mediates cell survival during the DNA damage process through activation of CDK2. This Rattus norvegicus (Rat) protein is Speedy protein A.